Here is a 461-residue protein sequence, read N- to C-terminus: Photosystem II CP43 reaction center protein (461 aa).

The propeptide occupies 1–2 (ME). Thr-3 is modified (N-acetylthreonine). Thr-3 is modified (phosphothreonine). 5 consecutive transmembrane segments (helical) span residues 57–81 (LFEV…PHLA), 122–143 (LLGP…KDRN), 166–188 (KALY…RKIS), 243–263 (KPFA…LSYS), and 279–300 (WFNN…ASQA). Glu-355 serves as a coordination point for [CaMn4O5] cluster. A helical membrane pass occupies residues 435–459 (RARAAAAGFEKGIDRDFEPVLSMTP).

This sequence belongs to the PsbB/PsbC family. PsbC subfamily. As to quaternary structure, PSII is composed of 1 copy each of membrane proteins PsbA, PsbB, PsbC, PsbD, PsbE, PsbF, PsbH, PsbI, PsbJ, PsbK, PsbL, PsbM, PsbT, PsbX, PsbY, PsbZ, Psb30/Ycf12, at least 3 peripheral proteins of the oxygen-evolving complex and a large number of cofactors. It forms dimeric complexes. It depends on Binds multiple chlorophylls and provides some of the ligands for the Ca-4Mn-5O cluster of the oxygen-evolving complex. It may also provide a ligand for a Cl- that is required for oxygen evolution. PSII binds additional chlorophylls, carotenoids and specific lipids. as a cofactor.

The protein resides in the plastid. Its subcellular location is the chloroplast thylakoid membrane. In terms of biological role, one of the components of the core complex of photosystem II (PSII). It binds chlorophyll and helps catalyze the primary light-induced photochemical processes of PSII. PSII is a light-driven water:plastoquinone oxidoreductase, using light energy to abstract electrons from H(2)O, generating O(2) and a proton gradient subsequently used for ATP formation. The sequence is that of Photosystem II CP43 reaction center protein from Trachelium caeruleum (Blue throatwort).